The sequence spans 303 residues: Probable phytol kinase, chloroplastic (303 aa).

The N-terminal 49 residues, 1 to 49 (MAAAAAWTGAASPNSLLLSRSPPHAAALAPSPGSSMRRRLLLGVGTPAV), are a transit peptide targeting the chloroplast. Transmembrane regions (helical) follow at residues 98-118 (VVHV…SNST), 122-144 (YFAA…RLYT), 168-188 (YVLV…IGIV), 227-247 (FISG…LGYI), 254-274 (ALGK…VPVT), and 276-296 (VVDD…LLFS).

Belongs to the polyprenol kinase family.

It is found in the plastid. The protein resides in the chloroplast membrane. The enzyme catalyses phytol + CTP = phytyl phosphate + CDP + H(+). It participates in cofactor biosynthesis; tocopherol biosynthesis. In terms of biological role, involved in the activation and reutilization of phytol from chlorophyll degradation in plant metabolism, including tocopherol biosynthesis. Catalyzes the conversion of phytol to phytol monophosphate (PMP). The protein is Probable phytol kinase, chloroplastic of Zea mays (Maize).